We begin with the raw amino-acid sequence, 1767 residues long: Endo-alpha-N-acetylgalactosaminidase (1767 aa).

A signal peptide spans 1 to 39 (MNKGLFEKRCKYSIRKFSLGVASVMIGAAFFGTSPVLAD). 2 stretches are compositionally biased toward basic and acidic residues: residues 61 to 75 (KEND…KVGE) and 84 to 111 (DGPK…DKPA). 2 disordered regions span residues 61-124 (KEND…VTPE) and 301-324 (VKTD…GPEV). The span at 112 to 124 (AAKPETPKTVTPE) shows a compositional bias: low complexity. Residues 304-324 (DNQEGVKTEDTPAEKETGPEV) show a composition bias toward basic and acidic residues. Ca(2+) is bound by residues Asp577, Asn579, Asp581, Asn583, and Asp588. A catalytic region spans residues 602-893 (GWEKVKDITA…DVMTKYFQHF (292 aa)). Asp658 contributes to the substrate binding site. Catalysis depends on Asp764, which acts as the Nucleophile. Glu796 serves as the catalytic Proton donor/acceptor. Positions 1233, 1235, 1281, 1284, and 1411 each coordinate Ca(2+). A disordered region spans residues 1711–1730 (LASEQGKTPDYKQEIARPET). Residues 1717-1730 (KTPDYKQEIARPET) are compositionally biased toward basic and acidic residues. Residues 1735–1739 (LPATG) carry the LPXTG sorting signal motif. Thr1738 carries the pentaglycyl murein peptidoglycan amidated threonine modification. The propeptide at 1739 to 1767 (GESQSDTALILASVSLALSALFVVKTKKD) is removed by sortase.

This sequence belongs to the glycosyl hydrolase 101 family. A subfamily.

Its subcellular location is the secreted. The protein resides in the cell wall. The catalysed reaction is a 3-O-[beta-D-galactosyl-(1-&gt;3)-N-acetyl-alpha-D-galactosaminyl]-L-threonyl-[protein] + H2O = beta-D-galactosyl-(1-&gt;3)-N-acetyl-D-galactosamine + L-threonyl-[protein]. It catalyses the reaction a 3-O-[beta-D-galactosyl-(1-&gt;3)-N-acetyl-alpha-D-galactosaminyl]-L-seryl-[protein] + H2O = beta-D-galactosyl-(1-&gt;3)-N-acetyl-D-galactosamine + L-seryl-[protein]. In terms of biological role, involved in the breakdown of mucin-type O-linked glycans. Specifically removes the T-antigen disaccharide (Gal-beta-1,3-GalNAc-alpha) from extracellular host glycoproteins. Representative of a broadly important class of virulence factors. The chain is Endo-alpha-N-acetylgalactosaminidase from Streptococcus pneumoniae serotype 4 (strain ATCC BAA-334 / TIGR4).